The sequence spans 174 residues: Shikimate kinase 2 (174 aa).

12–17 (GCGKTT) is an ATP binding site. The Mg(2+) site is built by threonine 16 and aspartate 32. Positions 34, 58, and 79 each coordinate substrate. An LID domain region spans residues 112–126 (EAYPLADQRPTLTGR). An ATP-binding site is contributed by arginine 120. Arginine 139 contacts substrate. Position 155 (glutamine 155) interacts with ATP.

This sequence belongs to the shikimate kinase family. AroL subfamily. Monomer. It depends on Mg(2+) as a cofactor.

The protein resides in the cytoplasm. It catalyses the reaction shikimate + ATP = 3-phosphoshikimate + ADP + H(+). The protein operates within metabolic intermediate biosynthesis; chorismate biosynthesis; chorismate from D-erythrose 4-phosphate and phosphoenolpyruvate: step 5/7. Functionally, catalyzes the specific phosphorylation of the 3-hydroxyl group of shikimic acid using ATP as a cosubstrate. This Erwinia tasmaniensis (strain DSM 17950 / CFBP 7177 / CIP 109463 / NCPPB 4357 / Et1/99) protein is Shikimate kinase 2.